Reading from the N-terminus, the 461-residue chain is Type IV secretion system protein PtlD homolog (461 aa).

Residues 1–24 (MAGLSRILLSCTLACLLAGQAAQA) form the signal peptide. A run of 5 helical transmembrane segments spans residues 118 to 138 (LQPL…YALL), 232 to 252 (WLLC…LAAS), 253 to 273 (LLIV…LFLV), 294 to 314 (ALVF…VLAG), and 333 to 353 (MLAA…VPLA). Residues 376-411 (AHRQAAARQYAPRPAAAAAAAGPHQAGTYAASATPA) show a composition bias toward low complexity. A disordered region spans residues 376–461 (AHRQAAARQY…RVLPRKPNLP (86 aa)). Basic and acidic residues predominate over residues 439-453 (VRRDDRPAPAPDRRV).

It localises to the cell membrane. In Bordetella bronchiseptica (strain ATCC BAA-588 / NCTC 13252 / RB50) (Alcaligenes bronchisepticus), this protein is Type IV secretion system protein PtlD homolog (ptlD).